We begin with the raw amino-acid sequence, 698 residues long: 4-hydroxybutyrate--CoA ligase [ADP-forming] (698 aa).

The 54-residue stretch at 491 to 544 folds into the ATP-grasp domain; that stretch reads QEVLKAYGLPLPKSTLAKNEAEAVKAAKKIGYPVVMKIASPQIIHKSDAGGVKV. 517–544 contributes to the ATP binding site; sequence AKKIGYPVVMKIASPQIIHKSDAGGVKV.

This sequence in the N-terminal section; belongs to the acetate CoA ligase alpha subunit family. It in the C-terminal section; belongs to the acetate CoA ligase beta subunit family. Requires Mg(2+) as cofactor. It depends on Mn(2+) as a cofactor.

The enzyme catalyses 4-hydroxybutanoate + ATP + CoA = 4-hydroxybutanoyl-CoA + ADP + phosphate. In terms of biological role, involved in thaumarchaeal hydroxypropionate/hydroxybutyrate (HP/HB) cycle, a modified version of the autotrophic HP/HB cycle of Crenarchaeota. Catalyzes the formation of 4-hydroxybutyryl-CoA, ADP and phosphate from 4-hydroxybutyrate, coenzyme A (CoA) and ATP. Can also use acetate, propionate and butyrate, with poor catalytic efficiency. This is 4-hydroxybutyrate--CoA ligase [ADP-forming] from Nitrosopumilus maritimus (strain SCM1).